The sequence spans 424 residues: Serine--tRNA ligase (424 aa).

231–233 (TAE) lines the L-serine pocket. ATP is bound by residues 262 to 264 (RRE) and V278. L-serine is bound at residue E285. Residue 349–352 (EVSS) coordinates ATP. An L-serine-binding site is contributed by S384.

It belongs to the class-II aminoacyl-tRNA synthetase family. Type-1 seryl-tRNA synthetase subfamily. Homodimer. The tRNA molecule binds across the dimer.

It is found in the cytoplasm. The enzyme catalyses tRNA(Ser) + L-serine + ATP = L-seryl-tRNA(Ser) + AMP + diphosphate + H(+). It catalyses the reaction tRNA(Sec) + L-serine + ATP = L-seryl-tRNA(Sec) + AMP + diphosphate + H(+). It functions in the pathway aminoacyl-tRNA biosynthesis; selenocysteinyl-tRNA(Sec) biosynthesis; L-seryl-tRNA(Sec) from L-serine and tRNA(Sec): step 1/1. Functionally, catalyzes the attachment of serine to tRNA(Ser). Is also able to aminoacylate tRNA(Sec) with serine, to form the misacylated tRNA L-seryl-tRNA(Sec), which will be further converted into selenocysteinyl-tRNA(Sec). The chain is Serine--tRNA ligase from Chlamydia abortus (strain DSM 27085 / S26/3) (Chlamydophila abortus).